The following is a 591-amino-acid chain: General transcription and DNA repair factor IIH subunit TFB1-1 (591 aa).

BSD domains lie at 112-166 and 191-243; these read STSS…GKDS and RTNR…YLYS.

The protein belongs to the TFB1 family. Component of the 7-subunit TFIIH core complex composed of XPB, XPD, TFB1/GTF2H1, GTF2H2/P44, TFB4/GTF2H3, TFB2/GTF2H4 and TFB5/GTF2H5, which is active in NER. The core complex associates with the 3-subunit CDK-activating kinase (CAK) module composed of CYCH1/cyclin H1, CDKD and MAT1/At4g30820 to form the 10-subunit holoenzyme (holo-TFIIH) active in transcription.

Its subcellular location is the nucleus. Its function is as follows. Component of the general transcription and DNA repair factor IIH (TFIIH) core complex, which is involved in general and transcription-coupled nucleotide excision repair (NER) of damaged DNA and, when complexed to CAK, in RNA transcription by RNA polymerase II. In NER, TFIIH acts by opening DNA around the lesion to allow the excision of the damaged oligonucleotide and its replacement by a new DNA fragment. In transcription, TFIIH has an essential role in transcription initiation. When the pre-initiation complex (PIC) has been established, TFIIH is required for promoter opening and promoter escape. Phosphorylation of the C-terminal tail (CTD) of the largest subunit of RNA polymerase II by the kinase module CAK controls the initiation of transcription. This is General transcription and DNA repair factor IIH subunit TFB1-1 from Arabidopsis thaliana (Mouse-ear cress).